We begin with the raw amino-acid sequence, 289 residues long: tRNA dimethylallyltransferase (289 aa).

An ATP-binding site is contributed by 9–16 (GTTASGKT). 11 to 16 (TASGKT) serves as a coordination point for substrate. An interaction with substrate tRNA region spans residues 34–37 (DSLC).

This sequence belongs to the IPP transferase family. As to quaternary structure, monomer. Mg(2+) is required as a cofactor.

The catalysed reaction is adenosine(37) in tRNA + dimethylallyl diphosphate = N(6)-dimethylallyladenosine(37) in tRNA + diphosphate. Its function is as follows. Catalyzes the transfer of a dimethylallyl group onto the adenine at position 37 in tRNAs that read codons beginning with uridine, leading to the formation of N6-(dimethylallyl)adenosine (i(6)A). The protein is tRNA dimethylallyltransferase of Campylobacter jejuni (strain RM1221).